Reading from the N-terminus, the 354-residue chain is Rhodopsin (354 aa).

Residues 1–36 lie on the Extracellular side of the membrane; it reads MNGTEGPNFYIPMSNKTGVVRSPFEYPQYYLAEPWQ. N-linked (GlcNAc...) asparagine glycosylation is found at Asn-2 and Asn-15. Residues 37–61 form a helical membrane-spanning segment; sequence YSILCAYMFLLILLGFPINFMTLYV. Over 62-73 the chain is Cytoplasmic; it reads TIQHKKLRTPLN. Residues 74–96 traverse the membrane as a helical segment; that stretch reads YILLNLAFANHFMVLCGFTVTMY. Topologically, residues 97 to 110 are extracellular; that stretch reads SSMNGYFILGATGC. Cys-110 and Cys-187 are joined by a disulfide. A helical membrane pass occupies residues 111–133; sequence YVEGFFATLGGEIALWSLVVLAI. Positions 134 to 136 match the 'Ionic lock' involved in activated form stabilization motif; sequence ERY. At 134 to 152 the chain is on the cytoplasmic side; that stretch reads ERYVVVCKPMSNFRFSENH. The helical transmembrane segment at 153 to 173 threads the bilayer; that stretch reads AVMGVAFTWIMALSCAVPPLL. The Extracellular segment spans residues 174–202; the sequence is GWSRYIPEGMQCSCGVDYYTLKPEVNNES. A helical membrane pass occupies residues 203–224; sequence FVIYMFVVHFTIPLIIIFFCYG. At 225 to 252 the chain is on the cytoplasmic side; that stretch reads RLVCTVKEAAAQQQESATTQKAEKEVTR. A helical transmembrane segment spans residues 253–274; it reads MVIIMVVFFLICWVPYASVAFF. At 275 to 286 the chain is on the extracellular side; it reads IFSNQGSEFGPI. A helical membrane pass occupies residues 287–308; sequence FMTVPAFFAKSSSIYNPVIYIM. Position 296 is an N6-(retinylidene)lysine (Lys-296). Residues 309–354 are Cytoplasmic-facing; the sequence is LNKQFRNCMITTLCCGKNPFGEDDASSAATSKTEASSVSSSQVSPA. S-palmitoyl cysteine attachment occurs at residues Cys-322 and Cys-323. The segment at 331 to 354 is disordered; the sequence is DDASSAATSKTEASSVSSSQVSPA. Residues 334–354 show a composition bias toward low complexity; that stretch reads SSAATSKTEASSVSSSQVSPA.

This sequence belongs to the G-protein coupled receptor 1 family. Opsin subfamily. Post-translationally, contains one covalently linked retinal chromophore. Upon light absorption, the covalently bound 11-cis-retinal is converted to all-trans-retinal. After hydrolysis of the Schiff base and release of the covalently bound all-trans-retinal, active rhodopsin is regenerated by binding of a fresh molecule of 11-cis-retinal.

The protein resides in the membrane. It is found in the cell projection. It localises to the cilium. Its subcellular location is the photoreceptor outer segment. In terms of biological role, photoreceptor required for image-forming vision at low light intensity. Required for photoreceptor cell viability after birth. Light-induced isomerization of 11-cis to all-trans retinal triggers a conformational change that activates signaling via G-proteins. Subsequent receptor phosphorylation mediates displacement of the bound G-protein alpha subunit by arrestin and terminates signaling. This is Rhodopsin (RHO) from Bufo bufo (European toad).